Reading from the N-terminus, the 359-residue chain is Peptide chain release factor 1 (359 aa).

The residue at position 235 (Gln-235) is an N5-methylglutamine. Positions 283–309 are disordered; that stretch reads QKAESERSQARRSQVGSGDRSERIRTY.

It belongs to the prokaryotic/mitochondrial release factor family. Post-translationally, methylated by PrmC. Methylation increases the termination efficiency of RF1.

It localises to the cytoplasm. Peptide chain release factor 1 directs the termination of translation in response to the peptide chain termination codons UAG and UAA. This chain is Peptide chain release factor 1, found in Brucella melitensis biotype 2 (strain ATCC 23457).